The primary structure comprises 189 residues: Glycerol-3-phosphate acyltransferase (189 aa).

Helical transmembrane passes span 1–21, 50–70, 77–97, 111–131, and 151–171; these read MFWL…AIVL, KLAI…VLLA, LHAQ…PLYF, MLMG…LLTF, and LLAW…AMIV.

The protein belongs to the PlsY family. Probably interacts with PlsX.

The protein resides in the cell inner membrane. The enzyme catalyses an acyl phosphate + sn-glycerol 3-phosphate = a 1-acyl-sn-glycero-3-phosphate + phosphate. It functions in the pathway lipid metabolism; phospholipid metabolism. In terms of biological role, catalyzes the transfer of an acyl group from acyl-phosphate (acyl-PO(4)) to glycerol-3-phosphate (G3P) to form lysophosphatidic acid (LPA). This enzyme utilizes acyl-phosphate as fatty acyl donor, but not acyl-CoA or acyl-ACP. The polypeptide is Glycerol-3-phosphate acyltransferase (Pseudomonas putida (strain GB-1)).